Here is a 329-residue protein sequence, read N- to C-terminus: Carbohydrate sulfotransferase chst-1 (329 aa).

The Cytoplasmic segment spans residues 1–3 (MLK). Residues 4-23 (WFIISCCLLTAISYSTYYLF) form a helical; Signal-anchor for type II membrane protein membrane-spanning segment. The Lumenal portion of the chain corresponds to 24–329 (TSNSWIKTVK…FDFDTTFINS (306 aa)). 3'-phosphoadenylyl sulfate contacts are provided by residues 91–97 (KKSMSTL) and 157–165 (RDPIARFIS).

The protein belongs to the sulfotransferase 2 family. Highly expressed in the head and tail of hermaphrodites, in particular in amphid and phasmid sheath cells.

Its subcellular location is the golgi apparatus membrane. The catalysed reaction is chondroitin beta-D-glucuronate + n 3'-phosphoadenylyl sulfate = chondroitin 4'-sulfate + n adenosine 3',5'-bisphosphate + n H(+). Catalyzes the transfer of sulfate to position 4 of non-reducing N-acetylgalactosamine (GalNAc) residue of chondroitin. The polypeptide is Carbohydrate sulfotransferase chst-1 (Caenorhabditis elegans).